The following is a 146-amino-acid chain: Minor capsid protein P5 (146 aa).

As to quaternary structure, interacts with the major capsid protein.

Its subcellular location is the virion. In terms of biological role, one of the minor capsid proteins that constitute a network internal to the major capsid proteins and outside the lipid membrane. The minor capsid proteins glue and stabilize the capsomers. This is Minor capsid protein P5 from Paramecium bursaria Chlorella virus 1 (PBCV-1).